Here is a 1885-residue protein sequence, read N- to C-terminus: Fatty acid synthase subunit alpha (1885 aa).

The span at 92–107 (PDPADLAPKETPKQEE) shows a compositional bias: basic and acidic residues. A disordered region spans residues 92–140 (PDPADLAPKETPKQEESTPSAPAAATPTPAAAAAPTPAPAPASAGPVES). A compositionally biased stretch (low complexity) spans 108–126 (STPSAPAAATPTPAAAAAP). Residues 146-221 (VKANLLIHVL…EQFQDSFSGQ (76 aa)) form the Carrier domain. At S181 the chain carries O-(pantetheine 4'-phosphoryl)serine. Positions 1121–1661 (IQEIVVQHDL…QKGAQAVVVH (541 aa)) constitute a Ketosynthase family 3 (KS3) domain. Residues C1304, H1546, and H1587 each act as for beta-ketoacyl synthase activity in the active site. Mg(2+)-binding residues include D1771, V1772, and E1773. Acetyl-CoA-binding positions include 1771 to 1773 (DVE), Y1797, S1807, 1816 to 1826 (EAVFKALGVES), 1840 to 1843 (RDVN), and 1870 to 1872 (ISH). Residues S1871 and H1872 each contribute to the Mg(2+) site.

Belongs to the thiolase-like superfamily. Fungal fatty acid synthetase subunit alpha family. As to quaternary structure, [Alpha(6)beta(6)] hexamers of two multifunctional subunits (alpha and beta).

It catalyses the reaction acetyl-CoA + n malonyl-CoA + 2n NADPH + 4n H(+) = a long-chain-acyl-CoA + n CoA + n CO2 + 2n NADP(+).. The enzyme catalyses a fatty acyl-[ACP] + malonyl-[ACP] + H(+) = a 3-oxoacyl-[ACP] + holo-[ACP] + CO2. The catalysed reaction is a (3R)-hydroxyacyl-[ACP] + NADP(+) = a 3-oxoacyl-[ACP] + NADPH + H(+). Fatty acid synthetase catalyzes the formation of long-chain fatty acids from acetyl-CoA, malonyl-CoA and NADPH. The alpha subunit contains domains for: acyl carrier protein, 3-oxoacyl-[acyl-carrier-protein] reductase, and 3-oxoacyl-[acyl-carrier-protein] synthase. The polypeptide is Fatty acid synthase subunit alpha (FAS2) (Candida albicans (Yeast)).